Here is a 284-residue protein sequence, read N- to C-terminus: Release factor glutamine methyltransferase (284 aa).

Residues 125–129 (GVGSG), glutamate 148, and asparagine 190 contribute to the S-adenosyl-L-methionine site. 190–193 (NPPY) lines the substrate pocket.

Belongs to the protein N5-glutamine methyltransferase family. PrmC subfamily.

The enzyme catalyses L-glutaminyl-[peptide chain release factor] + S-adenosyl-L-methionine = N(5)-methyl-L-glutaminyl-[peptide chain release factor] + S-adenosyl-L-homocysteine + H(+). Its function is as follows. Methylates the class 1 translation termination release factors RF1/PrfA and RF2/PrfB on the glutamine residue of the universally conserved GGQ motif. The sequence is that of Release factor glutamine methyltransferase from Geobacter sulfurreducens (strain ATCC 51573 / DSM 12127 / PCA).